We begin with the raw amino-acid sequence, 353 residues long: S-adenosylmethionine:tRNA ribosyltransferase-isomerase (353 aa).

Belongs to the QueA family. As to quaternary structure, monomer.

It localises to the cytoplasm. The catalysed reaction is 7-aminomethyl-7-carbaguanosine(34) in tRNA + S-adenosyl-L-methionine = epoxyqueuosine(34) in tRNA + adenine + L-methionine + 2 H(+). Its pathway is tRNA modification; tRNA-queuosine biosynthesis. Transfers and isomerizes the ribose moiety from AdoMet to the 7-aminomethyl group of 7-deazaguanine (preQ1-tRNA) to give epoxyqueuosine (oQ-tRNA). In Burkholderia vietnamiensis (strain G4 / LMG 22486) (Burkholderia cepacia (strain R1808)), this protein is S-adenosylmethionine:tRNA ribosyltransferase-isomerase.